Consider the following 186-residue polypeptide: ADP-ribosylation factor-like protein 6 (186 aa).

A lipid anchor (N-myristoyl glycine) is attached at Gly2. Residues 24–31, Thr50, 69–73, Gly72, 130–133, and Ala164 each bind GTP; these read GLDNSGKT, DMSGQ, and NKMD. Position 50 (Thr50) interacts with Mg(2+).

The protein belongs to the small GTPase superfamily. Arf family. As to quaternary structure, interacts with SEC61B, ARL6IP1, ARL6IP2, ARL6IP3, ARL6IP4 ARL6IP5 and ARL6IP6. Interacts (GTP-bound form) with the BBSome a complex that contains BBS1, BBS2, BBS4, BBS5, BBS7, BBS8/TTC8, BBS9 and BBIP10. Interacts (GTP-free form) with IFT27.

It localises to the cell projection. It is found in the cilium membrane. The protein resides in the cytoplasm. Its subcellular location is the cytoskeleton. The protein localises to the cilium axoneme. It localises to the cilium basal body. Its function is as follows. Involved in membrane protein trafficking at the base of the ciliary organelle. Mediates recruitment onto plasma membrane of the BBSome complex which would constitute a coat complex required for sorting of specific membrane proteins to the primary cilia. Together with the BBSome complex and LTZL1, controls SMO ciliary trafficking and contributes to the sonic hedgehog (SHH) pathway regulation. May regulate cilia assembly and disassembly and subsequent ciliary signaling events such as the Wnt signaling cascade. Isoform 2 may be required for proper retinal function and organization. This chain is ADP-ribosylation factor-like protein 6 (ARL6), found in Pongo abelii (Sumatran orangutan).